Reading from the N-terminus, the 95-residue chain is Aspartyl/glutamyl-tRNA(Asn/Gln) amidotransferase subunit C (95 aa).

Belongs to the GatC family. As to quaternary structure, heterotrimer of A, B and C subunits.

It catalyses the reaction L-glutamyl-tRNA(Gln) + L-glutamine + ATP + H2O = L-glutaminyl-tRNA(Gln) + L-glutamate + ADP + phosphate + H(+). The enzyme catalyses L-aspartyl-tRNA(Asn) + L-glutamine + ATP + H2O = L-asparaginyl-tRNA(Asn) + L-glutamate + ADP + phosphate + 2 H(+). Allows the formation of correctly charged Asn-tRNA(Asn) or Gln-tRNA(Gln) through the transamidation of misacylated Asp-tRNA(Asn) or Glu-tRNA(Gln) in organisms which lack either or both of asparaginyl-tRNA or glutaminyl-tRNA synthetases. The reaction takes place in the presence of glutamine and ATP through an activated phospho-Asp-tRNA(Asn) or phospho-Glu-tRNA(Gln). The protein is Aspartyl/glutamyl-tRNA(Asn/Gln) amidotransferase subunit C of Methylorubrum extorquens (strain CM4 / NCIMB 13688) (Methylobacterium extorquens).